The sequence spans 95 residues: MGRSTKKGPYVDPKLLKKIRQLNEAGEKKIIKTWSRASMIVPEMVGHTIAVYNGLKHIPVYITENMVGHRLGEFSFTRRFGGHADKSASKGQVKK.

The protein belongs to the universal ribosomal protein uS19 family.

Protein S19 forms a complex with S13 that binds strongly to the 16S ribosomal RNA. The protein is Small ribosomal subunit protein uS19 of Thermosipho africanus (strain TCF52B).